Here is a 257-residue protein sequence, read N- to C-terminus: Protein windbeutel (257 aa).

Positions 1-21 are cleaved as a signal peptide; that stretch reads MMHILVTLLLVAIHSIPTTWA. The segment at 24-27 is CXXC motif; sequence CTGC. The short motif at 254 to 257 is the Prevents secretion from ER element; that stretch reads KEEL.

Homodimer. Interacts with pip; the interaction is direct and does not require pip to be folded. As to expression, briefly expressed in the follicle cells of the ovary, at around the time when the dorsoventral axis of the egg chamber is first established.

It is found in the endoplasmic reticulum lumen. Its function is as follows. Probable chaperone protein involved in dorsoventral axis patterning in early embryos. Probably acts by folding and targeting pipe (pip) into the Golgi. This chain is Protein windbeutel, found in Drosophila melanogaster (Fruit fly).